The following is a 575-amino-acid chain: Beta-amylase (575 aa).

Positions 1–36 (MLHSQKRIWKKIGLCLLSFILGITVFTGSFGSKAEA) are cleaved as a signal peptide. Asp77 contributes to the substrate binding site. Residues Glu84 and Asp88 each coordinate Ca(2+). Residues His117 and Asp125 each coordinate substrate. An intrachain disulfide couples Cys119 to Cys127. Glu171 is a Ca(2+) binding site. The active-site Proton donor is the Glu199. Substrate is bound by residues Lys315, His320, and Thr358. Catalysis depends on Glu395, which acts as the Proton acceptor. Residues 396–397 (NA) and Arg424 each bind substrate.

This sequence belongs to the glycosyl hydrolase 14 family. Monomer. Ca(2+) serves as cofactor.

The enzyme catalyses Hydrolysis of (1-&gt;4)-alpha-D-glucosidic linkages in polysaccharides so as to remove successive maltose units from the non-reducing ends of the chains.. The protein is Beta-amylase of Niallia circulans (Bacillus circulans).